Here is a 160-residue protein sequence, read N- to C-terminus: 2-amino-4-hydroxy-6-hydroxymethyldihydropteridine pyrophosphokinase (160 aa).

The protein belongs to the HPPK family. Monomer.

It carries out the reaction 6-hydroxymethyl-7,8-dihydropterin + ATP = (7,8-dihydropterin-6-yl)methyl diphosphate + AMP + H(+). Its pathway is cofactor biosynthesis; tetrahydrofolate biosynthesis; 2-amino-4-hydroxy-6-hydroxymethyl-7,8-dihydropteridine diphosphate from 7,8-dihydroneopterin triphosphate: step 4/4. Catalyzes the transfer of pyrophosphate from adenosine triphosphate (ATP) to 6-hydroxymethyl-7,8-dihydropterin, an enzymatic step in folate biosynthesis pathway. This is 2-amino-4-hydroxy-6-hydroxymethyldihydropteridine pyrophosphokinase (folK) from Haemophilus influenzae (strain ATCC 51907 / DSM 11121 / KW20 / Rd).